We begin with the raw amino-acid sequence, 599 residues long: Elongation factor 4 (599 aa).

The region spanning 5–187 (SHIRNFSIIA…RLVTTIPAPT (183 aa)) is the tr-type G domain. Residues 17-22 (DHGKST) and 134-137 (NKID) each bind GTP.

This sequence belongs to the TRAFAC class translation factor GTPase superfamily. Classic translation factor GTPase family. LepA subfamily.

It localises to the cell inner membrane. It catalyses the reaction GTP + H2O = GDP + phosphate + H(+). Its function is as follows. Required for accurate and efficient protein synthesis under certain stress conditions. May act as a fidelity factor of the translation reaction, by catalyzing a one-codon backward translocation of tRNAs on improperly translocated ribosomes. Back-translocation proceeds from a post-translocation (POST) complex to a pre-translocation (PRE) complex, thus giving elongation factor G a second chance to translocate the tRNAs correctly. Binds to ribosomes in a GTP-dependent manner. In Pseudomonas fluorescens (strain ATCC BAA-477 / NRRL B-23932 / Pf-5), this protein is Elongation factor 4.